We begin with the raw amino-acid sequence, 1627 residues long: Formin-like protein 5 (1627 aa).

The Phosphatase tensin-type domain occupies 5–194; it reads RKFFLKKTPD…HYITRQGSGP (190 aa). Cys-127 functions as the Phosphocysteine intermediate in the catalytic mechanism. The C2 tensin-type domain maps to 200 to 337; that stretch reads SRPLILDSIV…FRAEVVFSDP (138 aa). Disordered regions lie at residues 370–413, 680–787, 801–1181, 1241–1261, and 1571–1627; these read EAEE…LEKH, TKRE…YDSS, KFNV…RGVV, AAVPKPNDSSKSDSRRKSLGS, and KQAE…KDVG. Composition is skewed to basic and acidic residues over residues 402–413, 681–691, 700–717, and 726–742; these read VSREDSGSLEKH, KREESGGRRDV, IEARAKSPRISSDRRQIP, and MPVDHAPEAVLLEEKLG. 6 stretches are compositionally biased toward pro residues: residues 824–835, 852–870, 877–886, 897–908, 931–965, and 974–1168; these read APPPPPPPPPPY, QPPPPPPPPPLPPPPPPPA, IPPPPPPPPL, VPPPPPPPPPPR, ISPPPPPPPPPLKPSSGAPCPPPPPPPPPPPPPSA, and APPP…PPGG. Positions 1188 to 1588 constitute an FH2 domain; that stretch reads FGAAAARKST…RAEKEAEAEK (401 aa). 2 stretches are compositionally biased toward basic and acidic residues: residues 1248-1261 and 1571-1590; these read DSSKSDSRRKSLGS and KQAELDKKRAEKEAEAEKSK. Polar residues predominate over residues 1600–1611; sequence KPSNPSRQVKQT. A compositionally biased stretch (basic and acidic residues) spans 1612-1627; the sequence is PDTKTRAASRRGKDVG.

It belongs to the formin-like family. Class-II subfamily.

This chain is Formin-like protein 5 (FH5), found in Oryza sativa subsp. japonica (Rice).